The primary structure comprises 226 residues: Phosphoglycolate phosphatase (226 aa).

Asp-10 serves as the catalytic Nucleophile. Mg(2+) contacts are provided by Asp-10, Asp-12, and Asp-175.

It belongs to the HAD-like hydrolase superfamily. CbbY/CbbZ/Gph/YieH family. Mg(2+) serves as cofactor.

The catalysed reaction is 2-phosphoglycolate + H2O = glycolate + phosphate. Its pathway is organic acid metabolism; glycolate biosynthesis; glycolate from 2-phosphoglycolate: step 1/1. Functionally, specifically catalyzes the dephosphorylation of 2-phosphoglycolate. Is involved in the dissimilation of the intracellular 2-phosphoglycolate formed during the DNA repair of 3'-phosphoglycolate ends, a major class of DNA lesions induced by oxidative stress. The protein is Phosphoglycolate phosphatase of Vibrio cholerae serotype O1 (strain ATCC 39315 / El Tor Inaba N16961).